Here is a 400-residue protein sequence, read N- to C-terminus: Elongation factor Tu (400 aa).

The tr-type G domain maps to 10–210 (KPHVNVGTIG…ALDSYIPEPV (201 aa)). The segment at 19 to 26 (GHVDHGKT) is G1. 19-26 (GHVDHGKT) serves as a coordination point for GTP. Mg(2+) is bound at residue T26. The tract at residues 66 to 70 (ILTIA) is G2. Residues 87 to 90 (DCPG) are G3. Residues 87-91 (DCPGH) and 142-145 (NKCD) contribute to the GTP site. The segment at 142–145 (NKCD) is G4. Positions 180–182 (SAI) are G5.

The protein belongs to the TRAFAC class translation factor GTPase superfamily. Classic translation factor GTPase family. EF-Tu/EF-1A subfamily. In terms of assembly, monomer.

Its subcellular location is the cytoplasm. It catalyses the reaction GTP + H2O = GDP + phosphate + H(+). Its function is as follows. GTP hydrolase that promotes the GTP-dependent binding of aminoacyl-tRNA to the A-site of ribosomes during protein biosynthesis. The polypeptide is Elongation factor Tu (Gemmatimonas aurantiaca (strain DSM 14586 / JCM 11422 / NBRC 100505 / T-27)).